Here is a 510-residue protein sequence, read N- to C-terminus: ATP synthase subunit alpha (510 aa).

ATP is bound at residue glycine 170–threonine 177.

It belongs to the ATPase alpha/beta chains family. In terms of assembly, F-type ATPases have 2 components, CF(1) - the catalytic core - and CF(0) - the membrane proton channel. CF(1) has five subunits: alpha(3), beta(3), gamma(1), delta(1), epsilon(1). CF(0) has three main subunits: a(1), b(2) and c(9-12). The alpha and beta chains form an alternating ring which encloses part of the gamma chain. CF(1) is attached to CF(0) by a central stalk formed by the gamma and epsilon chains, while a peripheral stalk is formed by the delta and b chains.

It localises to the cell inner membrane. It catalyses the reaction ATP + H2O + 4 H(+)(in) = ADP + phosphate + 5 H(+)(out). Functionally, produces ATP from ADP in the presence of a proton gradient across the membrane. The alpha chain is a regulatory subunit. This Caulobacter sp. (strain K31) protein is ATP synthase subunit alpha.